Here is a 392-residue protein sequence, read N- to C-terminus: MEVAIVAAQRTAIGSFGGGLAKIPAPELGATVIKALLEKTGVKPEDVSEVILGQVLTAGSGQNPARQALIKAGLPVTTPATTLNVVCGSGLRAVHLAAQAILAGDADIVIAGGQESMSLSPHILPGSRDGFRMGNAQLVDTMVNDGLTDAYNAYHMGITAENVAAKYGIGREEQDAFSLQSQQRAAAAQKAGKFRDEIVPVLVPQRKGDPLAFDADEFIKHDASADGLAKLRPAFKKDGTVTAGNASGINDGAAAVLLMSTQKADQLGLKPLAIIKGYALTGCEPEIMGIGPVSATRKALSKAGWTVEDLDLVEANEAFAAQALGVAKELGWGSDKVNVNGGAIALGHPIGASGCRVLVTLLHEMQRRGAKKGLATLCIGGGMGVALAVERP.

Cys87 functions as the Acyl-thioester intermediate in the catalytic mechanism. Residues His348 and Cys378 each act as proton acceptor in the active site.

It belongs to the thiolase-like superfamily. Thiolase family.

The protein resides in the cytoplasm. It catalyses the reaction 2 acetyl-CoA = acetoacetyl-CoA + CoA. The protein operates within metabolic intermediate biosynthesis; (R)-mevalonate biosynthesis; (R)-mevalonate from acetyl-CoA: step 1/3. Functionally, involved in the production of polyhydroxyalkonic acids (PHAs), composed primarily of 3-hydroxybutyric acid (3HB) and 3-hydroxyvaleric acid (3HV). This Chromobacterium violaceum (strain ATCC 12472 / DSM 30191 / JCM 1249 / CCUG 213 / NBRC 12614 / NCIMB 9131 / NCTC 9757 / MK) protein is Acetyl-CoA acetyltransferase (phaA).